Here is a 202-residue protein sequence, read N- to C-terminus: Small ribosomal subunit protein uS4 (202 aa).

The segment at 16–43 is disordered; sequence GELPGLSRKTPRRAYPPGQHGQGRRKRS. Positions 90 to 152 constitute an S4 RNA-binding domain; the sequence is MRLDNTVFRL…DNSRRMVETN (63 aa).

The protein belongs to the universal ribosomal protein uS4 family. As to quaternary structure, part of the 30S ribosomal subunit. Contacts protein S5. The interaction surface between S4 and S5 is involved in control of translational fidelity.

Its function is as follows. One of the primary rRNA binding proteins, it binds directly to 16S rRNA where it nucleates assembly of the body of the 30S subunit. With S5 and S12 plays an important role in translational accuracy. The polypeptide is Small ribosomal subunit protein uS4 (Crocosphaera subtropica (strain ATCC 51142 / BH68) (Cyanothece sp. (strain ATCC 51142))).